A 246-amino-acid polypeptide reads, in one-letter code: 3-deoxy-manno-octulosonate cytidylyltransferase (246 aa).

Belongs to the KdsB family.

It localises to the cytoplasm. The catalysed reaction is 3-deoxy-alpha-D-manno-oct-2-ulosonate + CTP = CMP-3-deoxy-beta-D-manno-octulosonate + diphosphate. It participates in nucleotide-sugar biosynthesis; CMP-3-deoxy-D-manno-octulosonate biosynthesis; CMP-3-deoxy-D-manno-octulosonate from 3-deoxy-D-manno-octulosonate and CTP: step 1/1. It functions in the pathway bacterial outer membrane biogenesis; lipopolysaccharide biosynthesis. Functionally, activates KDO (a required 8-carbon sugar) for incorporation into bacterial lipopolysaccharide in Gram-negative bacteria. This chain is 3-deoxy-manno-octulosonate cytidylyltransferase, found in Bradyrhizobium diazoefficiens (strain JCM 10833 / BCRC 13528 / IAM 13628 / NBRC 14792 / USDA 110).